The following is a 162-amino-acid chain: Xanthine-guanine phosphoribosyltransferase (162 aa).

5-phospho-alpha-D-ribose 1-diphosphate is bound by residues 43-44 (RG) and 94-102 (DDLVDTGTT). Asp-95 serves as a coordination point for Mg(2+). Guanine-binding residues include Asp-98 and Ile-141. Asp-98 and Ile-141 together coordinate xanthine. GMP-binding positions include 98-102 (DTGTT) and 140-141 (WI).

The protein belongs to the purine/pyrimidine phosphoribosyltransferase family. XGPT subfamily. In terms of assembly, homotetramer. Requires Mg(2+) as cofactor.

Its subcellular location is the cell inner membrane. It carries out the reaction GMP + diphosphate = guanine + 5-phospho-alpha-D-ribose 1-diphosphate. The enzyme catalyses XMP + diphosphate = xanthine + 5-phospho-alpha-D-ribose 1-diphosphate. The catalysed reaction is IMP + diphosphate = hypoxanthine + 5-phospho-alpha-D-ribose 1-diphosphate. It functions in the pathway purine metabolism; GMP biosynthesis via salvage pathway; GMP from guanine: step 1/1. The protein operates within purine metabolism; XMP biosynthesis via salvage pathway; XMP from xanthine: step 1/1. Purine salvage pathway enzyme that catalyzes the transfer of the ribosyl-5-phosphate group from 5-phospho-alpha-D-ribose 1-diphosphate (PRPP) to the N9 position of the 6-oxopurines guanine and xanthine to form the corresponding ribonucleotides GMP (guanosine 5'-monophosphate) and XMP (xanthosine 5'-monophosphate), with the release of PPi. To a lesser extent, also acts on hypoxanthine. The polypeptide is Xanthine-guanine phosphoribosyltransferase (Oleidesulfovibrio alaskensis (strain ATCC BAA-1058 / DSM 17464 / G20) (Desulfovibrio alaskensis)).